Reading from the N-terminus, the 1103-residue chain is Retinal guanylyl cyclase 1 (1103 aa).

An N-terminal signal peptide occupies residues 1–51 (MTACARRAGGLPDPGLCGPAWWAPSLPRLPRALPRLPLLLLLLLLQPPALS). Residues 52-462 (AVFTVGVLGP…PNNICGGGLE (411 aa)) lie on the Extracellular side of the membrane. The N-linked (GlcNAc...) asparagine glycan is linked to asparagine 297. Residues 463–487 (PGLVFLGFLLVVGMGLAGAFLAHYV) form a helical membrane-spanning segment. Residues 488–1103 (RHRLLHMQMV…LEKARPGQFS (616 aa)) lie on the Cytoplasmic side of the membrane. The region spanning 525 to 808 (QGSRSSLGAR…DHTFDLFKNI (284 aa)) is the Protein kinase domain. Residues 880-1010 (TLYFSDIVGF…DTVNTASRME (131 aa)) enclose the Guanylate cyclase domain. A disordered region spans residues 1065 to 1103 (PIPKPPDLQPGSSNHGISLQEIPPERRRKLEKARPGQFS).

Belongs to the adenylyl cyclase class-4/guanylyl cyclase family. As to quaternary structure, homodimer; requires homodimerization for guanylyl cyclase activity. Interacts with RD3; promotes the exit of GUCY2D from the endoplasmic reticulum and its trafficking to the photoreceptor outer segments. Interaction with RD3 negatively regulates guanylate cyclase activity. As to expression, retina.

The protein localises to the photoreceptor outer segment membrane. Its subcellular location is the endoplasmic reticulum membrane. It catalyses the reaction GTP = 3',5'-cyclic GMP + diphosphate. With respect to regulation, activated by GUCA1A when free calcium ions concentration is low, and inhibited by GUCA1A when free calcium ions concentration is high. Negatively regulated by RD3; inhibits the basal and GUCA1A-stimulated guanylate cyclase activity. Catalyzes the synthesis of cyclic GMP (cGMP) in rods and cones of photoreceptors. Plays an essential role in phototransduction, by mediating cGMP replenishment. May also participate in the trafficking of membrane-asociated proteins to the photoreceptor outer segment membrane. This Homo sapiens (Human) protein is Retinal guanylyl cyclase 1 (GUCY2D).